The primary structure comprises 567 residues: GBF-interacting protein 1 (567 aa).

3 disordered regions span residues 70–150 (ERKK…PSGI), 164–192 (DKVDTEEQPLSKATSSSKDVVEPDKSKES), and 545–567 (PIGPSHVTNQQPQAARTNLGNNY). Polar residues-rich tracts occupy residues 91-102 (FASSYTDASNGR) and 121-136 (TASSAPNNARNDTKPS). Positions 182 to 191 (DVVEPDKSKE) are enriched in basic and acidic residues. A compositionally biased stretch (polar residues) spans 550-567 (HVTNQQPQAARTNLGNNY).

It belongs to the GIP1 family. As to quaternary structure, monomer, homodimer, homooligomer. Under non-reducing conditions, predominantly present in high molecular weight forms, but predominates in low molecular weight monomers under reducing conditions. Interacts with BZIP16, BZIP68 and GBF1. Interacts with LBD18. In terms of tissue distribution, expressed in roots, leaves, stems and flowers.

It is found in the nucleus. In terms of biological role, plant specific protein that enhances G-box-binding factor (GBF) DNA binding activity. May function as a nuclear chaperone or lever and regulate the multimeric state of GBFs. May contribute to bZIP-mediated gene regulation. Is able to refold denatured rhodanese in vitro. Reduces DNA-binding activity of BZIP16, BZIP68 and GBF1 under non-reducing conditions through direct physical interaction. Acts as a negative co-regulator in red and blue light-mediated hypocotyl elongation. Functions to promote hypocotyl elongation during the early stages of seedling development by regulating the repression effect by BZIP16 and the activation effect by BZIP68 and GBF1 on LHCB2.4 expression. Enhances transcriptional activity of LBD18 in the EXP14 promoter. May act as a transcriptional coactivator of LBD18. This Arabidopsis thaliana (Mouse-ear cress) protein is GBF-interacting protein 1.